Reading from the N-terminus, the 97-residue chain is Large ribosomal subunit protein bL28 (97 aa).

The protein belongs to the bacterial ribosomal protein bL28 family.

This Nitrobacter winogradskyi (strain ATCC 25391 / DSM 10237 / CIP 104748 / NCIMB 11846 / Nb-255) protein is Large ribosomal subunit protein bL28.